Here is a 202-residue protein sequence, read N- to C-terminus: Putative 3-methyladenine DNA glycosylase (202 aa).

It belongs to the DNA glycosylase MPG family.

The chain is Putative 3-methyladenine DNA glycosylase from Clostridioides difficile (strain 630) (Peptoclostridium difficile).